The chain runs to 228 residues: uncharacterized protein (228 aa).

A run of 4 helical transmembrane segments spans residues 37–54 (WCMH…TLIV), 67–89 (VVSI…STGV), 104–126 (HIGI…TSRL), and 138–160 (VLHV…LVLY).

It localises to the cell membrane. This is an uncharacterized protein from Treponema pallidum (strain Nichols).